The following is a 554-amino-acid chain: MIETIPTKPYEGQRPGTSGLRKKVTVFEQPNYVENFVQATMDVVEPSAKGAHLVVGGDGRYFNFHAIQVIAAIAAGNGVEKIIVGTNGYLSTPAASHIIRKYKLTGGIILTASHNAGGPKNDFGIKYNLGNGGPAPESVTEKIYSITKTISEYKMVKIPPLDLTTTGVRRYGPLTVEVIDPVKDYVQLMKEIFDFDLIRSFLSKNPDFTFVFDALHGITGPYGEALFCKELGMPSSVCQNCKPLPDFGGGHPDPNLTYAKSLVARVDRDNIVMGAASDGDGDRNMIYGANAFVTPSDSVAIIAHHAELIPYFRDGGVHGFARSMPTSGAIDRVGKYKGKNVYEVPTGWKFFCNLFDAKRLSICGEESFGTGSDHIREKDGVWGILCWLNILAGLNAQNPKIKTLIDVKKDFYNIYGRTFYSRYDYEELENEAAGKVMDRMRAIADDKSKVGEAVLPGFVVSEAGDFEYHDPIDGSESKHQGLYIKFENGSRIVTRLSGTGSSGATLRLYMEKHESDSSKFDLDAQVALKPVVHAALEILALEELTGRKEPTVIT.

Residue R21 coordinates alpha-D-glucose 1,6-bisphosphate. T111 is subject to Phosphothreonine. S113 is an alpha-D-glucose 1,6-bisphosphate binding site. S113 functions as the Phosphoserine intermediate in the catalytic mechanism. Mg(2+) is bound by residues S113, D278, D280, and D282. A Phosphoserine modification is found at S113. Positions 282, 283, 346, 365, 367, and 378 each coordinate alpha-D-glucose 1,6-bisphosphate.

It belongs to the phosphohexose mutase family. Monomer. It depends on Mg(2+) as a cofactor.

Its subcellular location is the cytoplasm. The protein localises to the nucleus. It carries out the reaction alpha-D-glucose 1-phosphate = alpha-D-glucose 6-phosphate. The enzyme catalyses O-phospho-L-seryl-[protein] + alpha-D-glucose 1-phosphate = alpha-D-glucose 1,6-bisphosphate + L-seryl-[protein]. The catalysed reaction is alpha-D-glucose 1,6-bisphosphate + L-seryl-[protein] = O-phospho-L-seryl-[protein] + alpha-D-glucose 6-phosphate. Functionally, catalyzes the reversible isomerization of alpha-D-glucose 1-phosphate to alpha-D-glucose 6-phosphate. The mechanism proceeds via the intermediate compound alpha-D-glucose 1,6-bisphosphate. Key enzyme in hexose metabolism. The reverse reaction is an essential step for biosynthesis because glucose 1-phosphate is the starting point for the synthesis of UDP-glucose, which acts as a precursor for the synthesis of oligosaccharides and trehalose. This is Phosphoglucomutase from Schizosaccharomyces pombe (strain 972 / ATCC 24843) (Fission yeast).